Consider the following 619-residue polypeptide: Mitochondrial Rho GTPase 1 (619 aa).

Topologically, residues 1-593 (MKKDVRILLV…TQADLKSSTF (593 aa)) are cytoplasmic. The Miro 1 domain occupies 2–168 (KKDVRILLVG…FYYAQKAVLH (167 aa)). R14, G16, K17, T18, and S19 together coordinate GTP. Residue T18 coordinates Mg(2+). The Mg(2+) site is built by P35 and D57. GTP is bound by residues S59, N118, K119, D121, A149, and K150. EF-hand domains follow at residues 184 to 219 (ACIKALTRIFRISDQDNDGTLNDAELNFFQRICFNT) and 304 to 339 (HAYLFLQSIFDKHDLDRDCALSPDELKDLFKVFPYM). Ca(2+) contacts are provided by D197, D199, D201, T203, E208, D317, D319, D321, A323, and E328. Residues 417–580 (RNVFRCNVVG…FVKLTTMAMY (164 aa)) form the Miro 2 domain. The GTP site is built by G429, C430, G431, K432, S433, G434, R448, K529, D531, T559, and C560. G429 contributes to the Mg(2+) binding site. Residues 594-616 (WLRASFGATVFAFLGFAMYKALI) form a helical; Anchor for type IV membrane protein membrane-spanning segment. The Mitochondrial intermembrane portion of the chain corresponds to 617-619 (KQR).

This sequence belongs to the mitochondrial Rho GTPase family. Homodimer.

The protein resides in the mitochondrion outer membrane. The catalysed reaction is GTP + H2O = GDP + phosphate + H(+). It catalyses the reaction ATP + H2O = ADP + phosphate + H(+). It carries out the reaction UTP + H2O = UDP + phosphate + H(+). Atypical mitochondrial nucleoside-triphosphatase (NTPase) involved in mitochondrial trafficking. Probably involved in control of anterograde transport of mitochondria and their subcellular distribution. Can hydrolyze GTP, ATP and UTP. The polypeptide is Mitochondrial Rho GTPase 1 (RHOT1) (Gallus gallus (Chicken)).